Consider the following 189-residue polypeptide: Peptidyl-tRNA hydrolase (189 aa).

Y15 serves as a coordination point for tRNA. The Proton acceptor role is filled by H20. F66, N68, and N114 together coordinate tRNA.

This sequence belongs to the PTH family. In terms of assembly, monomer.

It is found in the cytoplasm. It catalyses the reaction an N-acyl-L-alpha-aminoacyl-tRNA + H2O = an N-acyl-L-amino acid + a tRNA + H(+). Hydrolyzes ribosome-free peptidyl-tRNAs (with 1 or more amino acids incorporated), which drop off the ribosome during protein synthesis, or as a result of ribosome stalling. Functionally, catalyzes the release of premature peptidyl moieties from peptidyl-tRNA molecules trapped in stalled 50S ribosomal subunits, and thus maintains levels of free tRNAs and 50S ribosomes. In Streptococcus pneumoniae (strain CGSP14), this protein is Peptidyl-tRNA hydrolase.